Reading from the N-terminus, the 199-residue chain is dITP/XTP pyrophosphatase (199 aa).

Substrate is bound at residue 8–13; sequence TSNKNK. Residues E40 and D68 each coordinate Mg(2+). The active-site Proton acceptor is D68. Residues S69, 154–157, K177, and 182–183 contribute to the substrate site; these read FGYD and HR.

The protein belongs to the HAM1 NTPase family. Homodimer. Requires Mg(2+) as cofactor.

The catalysed reaction is XTP + H2O = XMP + diphosphate + H(+). The enzyme catalyses dITP + H2O = dIMP + diphosphate + H(+). It catalyses the reaction ITP + H2O = IMP + diphosphate + H(+). Pyrophosphatase that catalyzes the hydrolysis of nucleoside triphosphates to their monophosphate derivatives, with a high preference for the non-canonical purine nucleotides XTP (xanthosine triphosphate), dITP (deoxyinosine triphosphate) and ITP. Seems to function as a house-cleaning enzyme that removes non-canonical purine nucleotides from the nucleotide pool, thus preventing their incorporation into DNA/RNA and avoiding chromosomal lesions. This chain is dITP/XTP pyrophosphatase, found in Wigglesworthia glossinidia brevipalpis.